The following is a 1020-amino-acid chain: Calcium-transporting ATPase 1 (1020 aa).

Met1 carries the N-acetylmethionine modification. At 1–162 (MESYLNENFG…NQFTESPSRG (162 aa)) the chain is on the stromal side. Residues 21–32 (ALQRWRKLCWIV) are interaction with calmodulin. Ser46 carries the phosphoserine; by CPK modification. Residues 163 to 183 (FWLFVWEALQDTTLMILAACA) traverse the membrane as a helical segment. The Lumenal segment spans residues 184–201 (FVSLIVGILMEGWPIGAH). The helical transmembrane segment at 202–222 (DGLGIVASILLVVFVTATSDY) threads the bilayer. The Stromal portion of the chain corresponds to 223–350 (RQSLQFKDLD…DDETPLQVKL (128 aa)). A helical membrane pass occupies residues 351 to 370 (NGVATIIGKIGLFFAVITFA). The Lumenal portion of the chain corresponds to 371-400 (VLVQGLANQKRLDNSHWIWTADELMAMLEY). The chain crosses the membrane as a helical span at residues 401-418 (FAVAVTIVVVAVPEGLPL). The Stromal portion of the chain corresponds to 419–813 (AVTLSLAFAM…KWGRSVYINI (395 aa)). The active-site 4-aspartylphosphate intermediate is Asp456. Residues Asp758 and Asp762 each coordinate Mg(2+). Residues 814-832 (QKFVQFQLTVNVVALIVNF) form a helical membrane-spanning segment. The Lumenal portion of the chain corresponds to 833–843 (LSACLTGNAPL). The helical transmembrane segment at 844–864 (TAVQLLWVNMIMDTLGALALA) threads the bilayer. At 865 to 884 (TEPPQDDLMKRSPVGRKGNF) the chain is on the stromal side. A helical membrane pass occupies residues 885–907 (ISNVMWRNILGQSLYQLVIIWCL). At 908–919 (QTKGKTMFGLDG) the chain is on the lumenal side. The helical transmembrane segment at 920–941 (PDSDLTLNTLIFNIFVFCQVFN) threads the bilayer. Topologically, residues 942-959 (EISSREMEKIDVFKGILK) are stromal. Residues 960 to 981 (NYVFVAVLTCTVVFQVIIIELL) form a helical membrane-spanning segment. The Lumenal portion of the chain corresponds to 982-991 (GTFADTTPLN). A helical membrane pass occupies residues 992–1013 (LGQWLVSIILGFLGMPVAAALK). At 1014-1020 (MIPVGSH) the chain is on the stromal side.

Belongs to the cation transport ATPase (P-type) (TC 3.A.3) family. Type IIB subfamily. As to expression, expressed at higher levels in roots than in leaves.

It is found in the plastid. Its subcellular location is the chloroplast inner membrane. The enzyme catalyses Ca(2+)(in) + ATP + H2O = Ca(2+)(out) + ADP + phosphate + H(+). Its activity is regulated as follows. Activated by calmodulin. This magnesium-dependent enzyme catalyzes the hydrolysis of ATP coupled with the translocation of calcium from the cytosol out of the cell or into organelles. The chain is Calcium-transporting ATPase 1 (ACA1) from Arabidopsis thaliana (Mouse-ear cress).